A 103-amino-acid chain; its full sequence is Flagellar hook-basal body complex protein FliE (103 aa).

It belongs to the FliE family.

The protein localises to the bacterial flagellum basal body. The protein is Flagellar hook-basal body complex protein FliE of Yersinia enterocolitica serotype O:8 / biotype 1B (strain NCTC 13174 / 8081).